The chain runs to 350 residues: 4-hydroxythreonine-4-phosphate dehydrogenase (350 aa).

Substrate is bound by residues histidine 138 and threonine 139. Residues histidine 173, histidine 218, and histidine 273 each contribute to the a divalent metal cation site. Substrate-binding residues include lysine 281, asparagine 290, and arginine 299.

This sequence belongs to the PdxA family. In terms of assembly, homodimer. Zn(2+) serves as cofactor. Requires Mg(2+) as cofactor. Co(2+) is required as a cofactor.

The protein localises to the cytoplasm. The catalysed reaction is 4-(phosphooxy)-L-threonine + NAD(+) = 3-amino-2-oxopropyl phosphate + CO2 + NADH. Its pathway is cofactor biosynthesis; pyridoxine 5'-phosphate biosynthesis; pyridoxine 5'-phosphate from D-erythrose 4-phosphate: step 4/5. Catalyzes the NAD(P)-dependent oxidation of 4-(phosphooxy)-L-threonine (HTP) into 2-amino-3-oxo-4-(phosphooxy)butyric acid which spontaneously decarboxylates to form 3-amino-2-oxopropyl phosphate (AHAP). This Xanthobacter autotrophicus (strain ATCC BAA-1158 / Py2) protein is 4-hydroxythreonine-4-phosphate dehydrogenase.